A 291-amino-acid polypeptide reads, in one-letter code: Protease HtpX (291 aa).

2 consecutive transmembrane segments (helical) span residues 4 to 24 (VLLF…VLSV) and 37 to 57 (GGLL…SLLM). His-143 serves as a coordination point for Zn(2+). The active site involves Glu-144. Position 147 (His-147) interacts with Zn(2+). The next 2 membrane-spanning stretches (helical) occupy residues 158–178 (LIQG…AGIV) and 198–218 (FAIS…IVMW). Glu-224 provides a ligand contact to Zn(2+).

This sequence belongs to the peptidase M48B family. Zn(2+) is required as a cofactor.

The protein localises to the cell inner membrane. This is Protease HtpX from Tolumonas auensis (strain DSM 9187 / NBRC 110442 / TA 4).